We begin with the raw amino-acid sequence, 573 residues long: Sulfite reductase [NADPH] hemoprotein beta-component (573 aa).

[4Fe-4S] cluster-binding residues include C438, C444, C483, and C487. Residue C487 coordinates siroheme.

This sequence belongs to the nitrite and sulfite reductase 4Fe-4S domain family. In terms of assembly, alpha(8)-beta(8). The alpha component is a flavoprotein, the beta component is a hemoprotein. Requires siroheme as cofactor. [4Fe-4S] cluster is required as a cofactor.

It carries out the reaction hydrogen sulfide + 3 NADP(+) + 3 H2O = sulfite + 3 NADPH + 4 H(+). Its pathway is sulfur metabolism; hydrogen sulfide biosynthesis; hydrogen sulfide from sulfite (NADPH route): step 1/1. In terms of biological role, component of the sulfite reductase complex that catalyzes the 6-electron reduction of sulfite to sulfide. This is one of several activities required for the biosynthesis of L-cysteine from sulfate. This Geobacillus thermodenitrificans (strain NG80-2) protein is Sulfite reductase [NADPH] hemoprotein beta-component.